The chain runs to 892 residues: Exo-beta-D-glucosaminidase (892 aa).

The N-terminal stretch at 1–18 is a signal peptide; sequence MLANAIAALLLGSGIASA. A propeptide spanning residues 19 to 28 is cleaved from the precursor; it reads AGHGSPLTSK. 3 N-linked (GlcNAc...) asparagine glycosylation sites follow: Asn-196, Asn-336, and Asn-440. Asp-464 (proton donor) is an active-site residue. Glu-539 serves as the catalytic Nucleophile. Asn-557, Asn-578, Asn-689, and Asn-825 each carry an N-linked (GlcNAc...) asparagine glycan.

This sequence belongs to the glycosyl hydrolase 2 family. Monomer.

The protein resides in the secreted. It is found in the extracellular space. The catalysed reaction is Hydrolysis of chitosan or chitosan oligosaccharides to remove successive D-glucosamine residues from the non-reducing termini.. Functionally, hydrolyzes chitosan and chitooligosaccharides with retention of anomeric configuration. Has no activity against beta-D-galactoside, beta-D-glucuronide, beta-D-mannoside, chitin, glycol chitosan, cellulose, N,N'-diacetylchitibiose and pNP-GlcNAc. The protein is Exo-beta-D-glucosaminidase of Hypocrea jecorina (Trichoderma reesei).